The following is a 557-amino-acid chain: uncharacterized protein (557 aa).

The Helicase ATP-binding domain occupies Lys-70 to Gly-224. Ala-82–Thr-90 lines the ATP pocket. The short motif at Asp-175–His-178 is the DEAH box element. Positions Gln-363–Leu-524 constitute a Helicase C-terminal domain.

Belongs to the SNF2/RAD54 helicase family.

This is an uncharacterized protein from Bacillus subtilis (strain 168).